A 134-amino-acid polypeptide reads, in one-letter code: Small ribosomal subunit protein uS12 (134 aa).

The residue at position 89 (Asp-89) is a 3-methylthioaspartic acid. The tract at residues 109 to 134 (KRNVSRSKYGAKKGKAGAAPTTGKKK) is disordered. Residues 111 to 123 (NVSRSKYGAKKGK) show a composition bias toward basic residues. The segment covering 124-134 (AGAAPTTGKKK) has biased composition (low complexity).

The protein belongs to the universal ribosomal protein uS12 family. In terms of assembly, part of the 30S ribosomal subunit. Contacts proteins S8 and S17. May interact with IF1 in the 30S initiation complex.

Functionally, with S4 and S5 plays an important role in translational accuracy. Interacts with and stabilizes bases of the 16S rRNA that are involved in tRNA selection in the A site and with the mRNA backbone. Located at the interface of the 30S and 50S subunits, it traverses the body of the 30S subunit contacting proteins on the other side and probably holding the rRNA structure together. The combined cluster of proteins S8, S12 and S17 appears to hold together the shoulder and platform of the 30S subunit. The sequence is that of Small ribosomal subunit protein uS12 from Wolinella succinogenes (strain ATCC 29543 / DSM 1740 / CCUG 13145 / JCM 31913 / LMG 7466 / NCTC 11488 / FDC 602W) (Vibrio succinogenes).